Consider the following 691-residue polypeptide: Proprotein convertase subtilisin/kexin type 9 (691 aa).

The signal sequence occupies residues 1–30 (MGIRCSTWLRWPLSPQLLLLLLLCPTGSRA). Positions 31–151 (QDEDGDYEEL…IEEDSLVFAQ (121 aa)) are excised as a propeptide. Residue tyrosine 37 is modified to Sulfotyrosine. Residue serine 46 is modified to Phosphoserine. Residues 154 to 441 (PWNLERIIPA…QRVLTPNRVA (288 aa)) enclose the Peptidase S8 domain. Residues aspartate 185 and histidine 225 each act as charge relay system in the active site. Intrachain disulfides connect cysteine 222–cysteine 254 and cysteine 322–cysteine 357. Serine 385 acts as the Charge relay system in catalysis. Residues 449–691 (ETGGQLLCRT…PSAKASWVHQ (243 aa)) are C-terminal domain. Disulfide bonds link cysteine 456-cysteine 526, cysteine 476-cysteine 525, and cysteine 485-cysteine 508. The short motif at 495 to 497 (RGD) is the Cell attachment site element. Asparagine 532 carries an N-linked (GlcNAc...) asparagine glycan. Disulfide bonds link cysteine 533-cysteine 600, cysteine 551-cysteine 599, cysteine 561-cysteine 587, cysteine 607-cysteine 678, cysteine 625-cysteine 677, and cysteine 634-cysteine 653. Serine 687 is modified (phosphoserine).

This sequence belongs to the peptidase S8 family. Monomer. Can self-associate to form dimers and higher multimers which may have increased LDLR degrading activity. The precursor protein but not the mature protein may form multimers. Interacts with APOB, VLDLR, LRP8/APOER2 and BACE1. The full-length immature form (pro-PCSK9) interacts with SCNN1A, SCNN1B and SCNN1G. The pro-PCSK9 form (via C-terminal domain) interacts with LDLR. Interacts (via the C-terminal domain) with ANXA2 (via repeat Annexin 1); the interaction inhibits the degradation of LDLR. Ca(2+) serves as cofactor. Post-translationally, cleavage by furin and PCSK5 generates a truncated inactive protein that is unable to induce LDLR degradation. In terms of processing, undergoes autocatalytic cleavage in the endoplasmic reticulum to release the propeptide from the N-terminus and the cleavage of the propeptide is strictly required for its maturation and activation. The cleaved propeptide however remains associated with the catalytic domain through non-covalent interactions, preventing potential substrates from accessing its active site. As a result, it is secreted from cells as a propeptide-containing, enzymatically inactive protein. Phosphorylation protects the propeptide against proteolysis. Highly expressed in 12-day embryo. In the adult, strongly expressed in liver, small intestine, jejunum, and to a lesser extent in kidney, lung, spleen and thymus. Expression in the liver is up-regulated following partial hepatectomy.

The protein resides in the cytoplasm. It is found in the secreted. The protein localises to the endosome. Its subcellular location is the lysosome. It localises to the cell surface. The protein resides in the endoplasmic reticulum. It is found in the golgi apparatus. Its proteolytic activity is autoinhibited by the non-covalent binding of the propeptide to the catalytic domain. Inhibited by EGTA. Its function is as follows. Crucial player in the regulation of plasma cholesterol homeostasis. Binds to low-density lipid receptor family members: low density lipoprotein receptor (LDLR), very low density lipoprotein receptor (VLDLR), apolipoprotein E receptor (LRP1/APOER) and apolipoprotein receptor 2 (LRP8/APOER2), and promotes their degradation in intracellular acidic compartments. Acts via a non-proteolytic mechanism to enhance the degradation of the hepatic LDLR through a clathrin LDLRAP1/ARH-mediated pathway. May prevent the recycling of LDLR from endosomes to the cell surface or direct it to lysosomes for degradation. Can induce ubiquitination of LDLR leading to its subsequent degradation. Inhibits intracellular degradation of APOB via the autophagosome/lysosome pathway in a LDLR-independent manner. Involved in the disposal of non-acetylated intermediates of BACE1 in the early secretory pathway. Inhibits epithelial Na(+) channel (ENaC)-mediated Na(+) absorption by reducing ENaC surface expression primarily by increasing its proteasomal degradation. Regulates neuronal apoptosis via modulation of LRP8/APOER2 levels and related anti-apoptotic signaling pathways. The sequence is that of Proprotein convertase subtilisin/kexin type 9 (Pcsk9) from Rattus norvegicus (Rat).